The sequence spans 37 residues: Hemextin B (37 aa).

As to quaternary structure, heterotetramer composed of 2 hemextin A and 2 hemextin B chains; non-covalently linked. Does not exist as a complex in the crude venom. In terms of processing, may contain several disulfide bonds. In terms of tissue distribution, expressed by the venom gland.

The protein resides in the secreted. Its function is as follows. Hemextin B (monomer): does not show anticoagulant activity. Seems only to synergitically enhance hemextin A activity. Hemextin AB complex: specifically inhibits the activation of FX (F10) by the TF-FVIIa complex (extrinsic tenase complex (ETC)) (IC(50)= 100 nM, Ki=50 nM) by non-competitively inhibiting the enzymatic activity of FVIIa. This chain is Hemextin B, found in Hemachatus haemachatus (Rinkhals).